Reading from the N-terminus, the 313-residue chain is Olfactory receptor 1J1 (313 aa).

The Extracellular portion of the chain corresponds to 1 to 25 (MRLKNHSSVSEFLLLGFPIRPEQGG). The N-linked (GlcNAc...) asparagine glycan is linked to N5. Residues 26-46 (IFFSLFLAMYLITVLGNLLII) traverse the membrane as a helical segment. Over 47–57 (LLIRLDSHLHT) the chain is Cytoplasmic. The helical transmembrane segment at 58–78 (PMYFFLSHLAFTDISFSSVTV) threads the bilayer. The Extracellular segment spans residues 79–97 (PKMLTKVQNQPIPITYEEC). C97 and C189 are oxidised to a cystine. A helical transmembrane segment spans residues 98 to 118 (VSQTYFFIFFADLDSFLITSM). Over 119–142 (AYDRYMAICHPLHYITIMSQSRCA) the chain is Cytoplasmic. A helical transmembrane segment spans residues 143-163 (MLVAVSWVIASACALLHSLLL). Residues 164 to 196 (DQLSFCADHTVPHFFCDLGALLKLSCSDTSLNQ) lie on the Extracellular side of the membrane. Residues 197 to 217 (LVIFTAGLAAIMLPFLCILIS) traverse the membrane as a helical segment. Residues 218-240 (YGRIGFTILQVPTTKGICKALST) lie on the Cytoplasmic side of the membrane. Residues 241 to 261 (CGSHLSVVALYYGSIIGLYFL) traverse the membrane as a helical segment. Over 262–271 (PPSNSKINNN) the chain is Extracellular. The helical transmembrane segment at 272-292 (IVASVMYTVVTPMLNPFIYSL) threads the bilayer. At 293-313 (RNKDMKGALKKLLSKKTEFSK) the chain is on the cytoplasmic side.

Belongs to the G-protein coupled receptor 1 family.

It localises to the cell membrane. Its function is as follows. Odorant receptor. The protein is Olfactory receptor 1J1 of Mus musculus (Mouse).